The sequence spans 581 residues: MPAPRAREQPRVPGERQPLLPRGARGPRRWRRAAGAAVLLVEMLERAAFFGVTANLVLYLNSTNFNWTGEQATRAALVFLGASYLLAPVGGWLADVYLGRYRAVALSLLLYLAASGLLPATAFPDGRSSFCGEMPASPLGPACPSAGCPRSSPSPYCAPVLYAGLLLLGLAASSVRSNLTSFGADQVMDLGRDATRRFFNWFYWSINLGAVLSLLVVAFIQQNISFLLGYSIPVGCVGLAFFIFLFATPVFITKPPMGSQVSSMLKLALQNCCPQLWQRHSARDRQCARVLADERSPQPGASPQEDIANFQVLVKILPVMVTLVPYWMVYFQMQSTYVLQGLHLHIPNIFPANPANISVALRAQGSSYTIPEAWLLLANVVVVLILVPLKDRLIDPLLLRCKLLPSALQKMALGMFFGFTSVIVAGVLEMERLHYIHHNETVSQQIGEVLYNAAPLSIWWQIPQYLLIGISEIFASIPGLEFAYSEAPRSMQGAIMGIFFCLSGVGSLLGSSLVALLSLPGGWLHCPKDFGNINNCRMDLYFFLLAGIQAVTALLFVWIAGRYERASQGPASHSRFSRDRG.

Residues 1 to 14 (MPAPRAREQPRVPG) show a composition bias toward basic and acidic residues. A disordered region spans residues 1-26 (MPAPRAREQPRVPGERQPLLPRGARG). Residues 38-58 (VLLVEMLERAAFFGVTANLVL) form a helical membrane-spanning segment. 2 N-linked (GlcNAc...) asparagine glycosylation sites follow: asparagine 61 and asparagine 66. Transmembrane regions (helical) follow at residues 76–96 (ALVFLGASYLLAPVGGWLADV), 103–123 (AVALSLLLYLAASGLLPATAF), and 155–175 (PYCAPVLYAGLLLLGLAASSV). N-linked (GlcNAc...) asparagine glycosylation occurs at asparagine 178. A helical transmembrane segment spans residues 200 to 220 (NWFYWSINLGAVLSLLVVAFI). Asparagine 223 carries N-linked (GlcNAc...) asparagine glycosylation. 2 helical membrane passes run 232 to 252 (IPVGCVGLAFFIFLFATPVFI) and 310 to 330 (FQVLVKILPVMVTLVPYWMVY). Asparagine 356 carries N-linked (GlcNAc...) asparagine glycosylation. The next 2 membrane-spanning stretches (helical) occupy residues 369–389 (TIPEAWLLLANVVVVLILVPL) and 411–431 (MALGMFFGFTSVIVAGVLEME). N-linked (GlcNAc...) asparagine glycosylation occurs at asparagine 439. 3 consecutive transmembrane segments (helical) span residues 458-478 (IWWQIPQYLLIGISEIFASIP), 497-517 (GIFFCLSGVGSLLGSSLVALL), and 540-560 (LYFFLLAGIQAVTALLFVWIA).

It belongs to the major facilitator superfamily. Proton-dependent oligopeptide transporter (POT/PTR) (TC 2.A.17) family.

It localises to the lysosome membrane. It is found in the endosome membrane. The enzyme catalyses glycylglycylglycine(out) + n H(+)(out) = glycylglycylglycine(in) + n H(+)(in). It catalyses the reaction carnosine(out) + n H(+)(out) = carnosine(in) + n H(+)(in). The catalysed reaction is L-histidine(out) + n H(+)(out) = L-histidine(in) + n H(+)(in). It carries out the reaction N-acetyl-D-muramoyl-L-alanyl-D-isoglutamine(out) + n H(+)(out) = N-acetyl-D-muramoyl-L-alanyl-D-isoglutamine(in) + n H(+)(in). Functionally, proton-coupled amino-acid transporter that transports free histidine and certain di- and tripeptides, and is involved in innate immune response. Also able to transport carnosine. Involved in the detection of microbial pathogens by toll-like receptors (TLRs) and NOD-like receptors (NLRs), probably by mediating transport of bacterial peptidoglycans across the endolysosomal membrane: catalyzes the transport of certain bacterial peptidoglycans, such as muramyl dipeptide (MDP), the NOD2 ligand. The polypeptide is Solute carrier family 15 member 3 (Homo sapiens (Human)).